The following is a 2144-amino-acid chain: Insulin-like receptor (2144 aa).

A signal peptide spans methionine 1–arginine 43. N-linked (GlcNAc...) asparagine glycosylation occurs at asparagine 74. The span at arginine 174–arginine 199 shows a compositional bias: basic residues. The tract at residues arginine 174–glutamine 200 is disordered. N-linked (GlcNAc...) asparagine glycosylation is present at asparagine 203. The interval asparagine 229 to arginine 256 is disordered. Residues glutamine 232–leucine 242 are compositionally biased toward low complexity. Asparagine 265, asparagine 356, asparagine 376, asparagine 406, asparagine 468, and asparagine 509 each carry an N-linked (GlcNAc...) asparagine glycan. 8 disulfide bridges follow: cysteine 531-cysteine 539, cysteine 535-cysteine 545, cysteine 546-cysteine 554, cysteine 550-cysteine 564, cysteine 567-cysteine 576, cysteine 580-cysteine 591, cysteine 597-cysteine 618, and cysteine 635-cysteine 638. The stretch at glutamate 542–glutamine 586 is one FU repeat. N-linked (GlcNAc...) asparagine glycans are attached at residues asparagine 561 and asparagine 569. Residues asparagine 751, asparagine 810, asparagine 824, asparagine 839, asparagine 864, asparagine 898, asparagine 946, asparagine 1053, asparagine 1147, asparagine 1218, and asparagine 1265 are each glycosylated (N-linked (GlcNAc...) asparagine). Fibronectin type-III domains lie at valine 825–glycine 927 and arginine 928–aspartate 1026. The tract at residues asparagine 1053–arginine 1084 is disordered. The Fibronectin type-III 3 domain maps to leucine 1210 to proline 1305. Residues valine 1311–valine 1331 form a helical membrane-spanning segment. The Cytoplasmic segment spans residues cysteine 1332–alanine 2144. Residues asparagine 1351–tyrosine 1354 are chico-binding. Tyrosine 1354 is subject to Phosphotyrosine; by autocatalysis. The region spanning isoleucine 1371 to phenylalanine 1659 is the Protein kinase domain. ATP contacts are provided by residues leucine 1377–valine 1385 and lysine 1405. The active-site Proton acceptor is the aspartate 1519. Phosphotyrosine; by autocatalysis occurs at positions 1545, 1549, and 1550. Disordered regions lie at residues valine 1690–proline 1724, arginine 1788–valine 1871, leucine 1886–asparagine 1962, and isoleucine 2020–alanine 2144. Serine 1816 is subject to Phosphoserine. Low complexity-rich tracts occupy residues serine 1849 to serine 1860 and serine 1894 to serine 1916. Positions serine 2042–glutamate 2062 are enriched in acidic residues. Residues histidine 2063–proline 2073 are compositionally biased toward basic and acidic residues. Residues serine 2084 to leucine 2120 show a composition bias toward polar residues.

This sequence belongs to the protein kinase superfamily. Tyr protein kinase family. Insulin receptor subfamily. Tetramer of 2 alpha and 2 beta chains linked by disulfide bonds. The alpha chains contribute to the formation of the ligand-binding domain, while the beta chains carry the kinase domain. Interacts (via C-terminal cytoplasmic region) with dock/dreadlocks (via SH2 and SH3 domains); when autophosphorylated. May interact (via beta subunit) with chico/IRS-1; this interaction may lead to tyrosine phosphorylation of the insulin receptor substrate chico. Interacts with Elp6; the interaction may stabilize Elp6. Mn(2+) is required as a cofactor. The 280 kDa proreceptor is proteolytically processed to form a 120 kDa alpha subunit and a 170 kDa beta subunit. The beta subunit undergoes cell-specific cleavage to generate a 90 kDa beta subunit and a free 60 kDa C-terminal subunit. Both the 90 kDa and the 170 kDa beta subunits can assemble with the alpha subunits to form mature receptors. In terms of processing, autophosphorylated on tyrosine residues, including Tyr-1549 and Tyr-1550, in response to exogenous insulin. Tyr-1549 and Tyr-1550 are dephosphorylated by Ptp61F recruited by the dock/dreadlocks adapter protein. Post-translationally, phosphorylation of Tyr-1354 is required for Chico-binding.

The protein localises to the membrane. Its subcellular location is the cell projection. It is found in the axon. It localises to the growth cone membrane. The catalysed reaction is L-tyrosyl-[protein] + ATP = O-phospho-L-tyrosyl-[protein] + ADP + H(+). Its activity is regulated as follows. Activated in response to insulin. Autophosphorylation activates the kinase activity. In terms of biological role, has a ligand-stimulated tyrosine-protein kinase activity. Binds 3 insulin-like peptide ligands. Regulates cell number and cell size during development by regulating cell growth and survival, affecting body size and organ size, including ovaries and imaginal disks. Plays a role in life-span determination. May be involved in regulation of other neuroendocrine signaling pathways. Involved in the development of the embryonic nervous system. Functions upstream of dock/dreadlocks for photoreceptor (R cell) axon guidance and targeting in the visual system. Involved in the acs mediated recovery of gut enterocytes following the cytoplasmic purge response to intestinal bacterial infection. This is Insulin-like receptor from Drosophila melanogaster (Fruit fly).